Here is a 566-residue protein sequence, read N- to C-terminus: Poly(A) polymerase pla1 (566 aa).

Residues 86–88 (YGS), 99–101 (DID), aspartate 153, lysine 214, tyrosine 223, and 232–233 (GV) each bind ATP. 3 residues coordinate Mg(2+): aspartate 99, aspartate 101, and aspartate 153. Disordered regions lie at residues 437–463 (HEKLANDTVNEEKADNTESKADGSENG) and 530–566 (DEVFEPGEERPKATKKRSTADTAHSTEQLKRQKVSTA).

It belongs to the poly(A) polymerase family. Requires Mg(2+) as cofactor. Mn(2+) serves as cofactor.

The protein localises to the nucleus. The enzyme catalyses RNA(n) + ATP = RNA(n)-3'-adenine ribonucleotide + diphosphate. In terms of biological role, polymerase that creates the 3'-poly(A) tail of mRNA's. May acquire specificity through interaction with a cleavage and polyadenylation factor (CF I). This Schizosaccharomyces pombe (strain 972 / ATCC 24843) (Fission yeast) protein is Poly(A) polymerase pla1 (pla1).